The following is a 273-amino-acid chain: NADPH-dependent 7-cyano-7-deazaguanine reductase (273 aa).

Substrate is bound at residue 81–83 (VES). An NADPH-binding site is contributed by 83–84 (SK). The active-site Thioimide intermediate is the cysteine 179. The Proton donor role is filled by aspartate 186. 218–219 (AE) is a binding site for substrate. NADPH is bound at residue 247 to 248 (RG).

The protein belongs to the GTP cyclohydrolase I family. QueF type 2 subfamily. In terms of assembly, homodimer.

It is found in the cytoplasm. It carries out the reaction 7-aminomethyl-7-carbaguanine + 2 NADP(+) = 7-cyano-7-deazaguanine + 2 NADPH + 3 H(+). It participates in tRNA modification; tRNA-queuosine biosynthesis. In terms of biological role, catalyzes the NADPH-dependent reduction of 7-cyano-7-deazaguanine (preQ0) to 7-aminomethyl-7-deazaguanine (preQ1). The chain is NADPH-dependent 7-cyano-7-deazaguanine reductase from Rickettsia felis (strain ATCC VR-1525 / URRWXCal2) (Rickettsia azadi).